Here is a 217-residue protein sequence, read N- to C-terminus: 3,4-dihydroxy-2-butanone 4-phosphate synthase (217 aa).

D-ribulose 5-phosphate-binding positions include 37-38 (RE), Asp-42, 150-154 (RGGHT), and Glu-174. Glu-38 lines the Mg(2+) pocket. Position 153 (His-153) interacts with Mg(2+).

The protein belongs to the DHBP synthase family. Homodimer. Mg(2+) serves as cofactor. Requires Mn(2+) as cofactor.

The catalysed reaction is D-ribulose 5-phosphate = (2S)-2-hydroxy-3-oxobutyl phosphate + formate + H(+). Its pathway is cofactor biosynthesis; riboflavin biosynthesis; 2-hydroxy-3-oxobutyl phosphate from D-ribulose 5-phosphate: step 1/1. In terms of biological role, catalyzes the conversion of D-ribulose 5-phosphate to formate and 3,4-dihydroxy-2-butanone 4-phosphate. The protein is 3,4-dihydroxy-2-butanone 4-phosphate synthase of Klebsiella pneumoniae (strain 342).